The sequence spans 1142 residues: Nucleoporin nup131 (1142 aa).

This sequence belongs to the nucleoporin Nup133 family. Component of the npc107-120 complex which consists of nup85, nup107, nup120, nup131, nup132 and seh1. Interacts with nup107.

Its subcellular location is the nucleus. Functions as a component of the nuclear pore complex (NPC). NPC components, collectively referred to as nucleoporins (NUPs), can play the role of both NPC structural components and of docking or interaction partners for transiently associated nuclear transport factors. Active directional transport is assured by both, a Phe-Gly (FG) repeat affinity gradient for these transport factors across the NPC and a transport cofactor concentration gradient across the nuclear envelope. In Schizosaccharomyces pombe (strain 972 / ATCC 24843) (Fission yeast), this protein is Nucleoporin nup131 (nup131).